Consider the following 154-residue polypeptide: Aspartate carbamoyltransferase regulatory chain (154 aa).

4 residues coordinate Zn(2+): Cys109, Cys114, Cys138, and Cys141.

It belongs to the PyrI family. In terms of assembly, contains catalytic and regulatory chains. Requires Zn(2+) as cofactor.

Its function is as follows. Involved in allosteric regulation of aspartate carbamoyltransferase. The chain is Aspartate carbamoyltransferase regulatory chain from Yersinia pestis.